The primary structure comprises 87 residues: Elastase inhibitor AFLEI (87 aa).

An N-terminal signal peptide occupies residues 1 to 19 (MKFSLACLLALAGLQAALA). A disulfide bridge links Cys-24 with Cys-86.

It is found in the secreted. Elastase inhibitor. The chain is Elastase inhibitor AFLEI from Aspergillus fumigatus (strain CBS 144.89 / FGSC A1163 / CEA10) (Neosartorya fumigata).